The chain runs to 321 residues: uncharacterized protein (321 aa).

Residues 1 to 5 (MKQQA) lie on the Cytoplasmic side of the membrane. A helical transmembrane segment spans residues 6-26 (GIGILLALTTAICWGALPIAM). The EamA 1 domain occupies 17 to 144 (ICWGALPIAM…LLSGLVMFFN (128 aa)). Topologically, residues 27 to 35 (KQVLEVMEP) are periplasmic. Residues 36–56 (PTIVFYRFLMASIGLGAILAV) traverse the membrane as a helical segment. At 57–70 (KKRLPPLRVFRKPR) the chain is on the cytoplasmic side. A helical transmembrane segment spans residues 71–91 (WLILLAVATAGLFGNFILFSS). Topologically, residues 92–99 (SLQYLSPT) are periplasmic. The chain crosses the membrane as a helical span at residues 100 to 120 (ASQVIGQLSPVGMMVASVFIL). Topologically, residues 121–130 (KEKMRSTQVV) are cytoplasmic. A helical membrane pass occupies residues 131–151 (GALMLLSGLVMFFNTSLVEIF). Over 152 to 156 (TKLTD) the chain is Periplasmic. The helical transmembrane segment at 157–177 (YTWGVIFGVGAATVWVSYGVA) threads the bilayer. Residues 169–292 (TVWVSYGVAQ…GYLGAFVVVA (124 aa)) enclose the EamA 2 domain. Over 178-190 (QKVLLRRLASPQI) the chain is Cytoplasmic. Residues 191–211 (LFLLYTLCTIALFPLAKPGVI) traverse the membrane as a helical segment. The Periplasmic segment spans residues 212-216 (AQLSH). A helical transmembrane segment spans residues 217–237 (WQLACLIFCGLNTLVGYGALA). Over 238–249 (EAMARWQAAQVS) the chain is Cytoplasmic. The chain crosses the membrane as a helical span at residues 250 to 270 (AIITLTPLFTLFFSDLLSLAW). At 271–278 (PDFFARPM) the chain is on the periplasmic side. The chain crosses the membrane as a helical span at residues 279–299 (LNLLGYLGAFVVVAGAMYSAI). The Cytoplasmic segment spans residues 300–321 (GHRIWGGLRKHTTVVSQPRAGE).

This sequence belongs to the EamA transporter family.

Its subcellular location is the cell inner membrane. This is an uncharacterized protein from Escherichia coli O157:H7.